A 120-amino-acid chain; its full sequence is Ubiquitin domain-containing protein TINCR (120 aa).

One can recognise a Ubiquitin-like domain in the interval 14-83 (YHIKVHLADE…LQDGSVLLLV (70 aa)).

As to expression, detected in stratum corneum (at protein level).

This chain is Ubiquitin domain-containing protein TINCR, found in Homo sapiens (Human).